The following is a 302-amino-acid chain: Ribosomal RNA small subunit methyltransferase A (302 aa).

Positions 27, 29, 54, 75, 100, and 138 each coordinate S-adenosyl-L-methionine.

The protein belongs to the class I-like SAM-binding methyltransferase superfamily. rRNA adenine N(6)-methyltransferase family. RsmA subfamily.

It is found in the cytoplasm. It carries out the reaction adenosine(1518)/adenosine(1519) in 16S rRNA + 4 S-adenosyl-L-methionine = N(6)-dimethyladenosine(1518)/N(6)-dimethyladenosine(1519) in 16S rRNA + 4 S-adenosyl-L-homocysteine + 4 H(+). Its function is as follows. Specifically dimethylates two adjacent adenosines (A1518 and A1519) in the loop of a conserved hairpin near the 3'-end of 16S rRNA in the 30S particle. May play a critical role in biogenesis of 30S subunits. This chain is Ribosomal RNA small subunit methyltransferase A, found in Natranaerobius thermophilus (strain ATCC BAA-1301 / DSM 18059 / JW/NM-WN-LF).